Here is an 836-residue protein sequence, read N- to C-terminus: RNA-binding protein 12B-A (836 aa).

The region spanning 154–229 (PYLFLRGLPY…RFIEVMQGSE (76 aa)) is the RRM 1 domain. A disordered region spans residues 237–277 (GTATEGGDTPRMRSEEHSPSRRINGRHFRKRSHSKSPRARS). Basic and acidic residues predominate over residues 244–255 (DTPRMRSEEHSP). Residues 259–277 (INGRHFRKRSHSKSPRARS) are compositionally biased toward basic residues. RRM domains lie at 283–359 (FYVH…PVSR) and 401–478 (LCIY…LISE). 2 disordered regions span residues 539 to 572 (GHFK…PWEE) and 620 to 644 (SQEH…RRSR). The segment covering 550 to 572 (QSDRRSPEDFRHSPEDYRHPWEE) has biased composition (basic and acidic residues). Ser-703 carries the post-translational modification Phosphoserine. Lys-758 is subject to N6-acetyllysine. Residues 760 to 836 (IPVKISNLPF…GPRKVKLSLL (77 aa)) enclose the RRM 4 domain.

This Mus musculus (Mouse) protein is RNA-binding protein 12B-A (Rbm12b1).